Here is a 168-residue protein sequence, read N- to C-terminus: uncharacterized protein (168 aa).

A helical transmembrane segment spans residues 24–44 (FIGIVLFLAVLIIGILILILF). Disordered stretches follow at residues 69–92 (SPSS…NNSN) and 142–168 (NNNN…TKNI). Positions 142–157 (NNNNNNNNNPPTNISN) are enriched in low complexity.

The protein resides in the membrane. This is an uncharacterized protein from Dictyostelium discoideum (Social amoeba).